The chain runs to 462 residues: CCA-adding enzyme (462 aa).

Residues Ser54 and Arg57 each coordinate ATP. Residues Ser54 and Arg57 each contribute to the CTP site. Mg(2+)-binding residues include Asp66, Asp68, and Asp117. Residues His140, Lys160, and Tyr169 each coordinate ATP. CTP-binding residues include His140, Lys160, and Tyr169.

This sequence belongs to the tRNA nucleotidyltransferase/poly(A) polymerase family. Archaeal CCA-adding enzyme subfamily. Homodimer. The cofactor is Mg(2+).

The enzyme catalyses a tRNA precursor + 2 CTP + ATP = a tRNA with a 3' CCA end + 3 diphosphate. The catalysed reaction is a tRNA with a 3' CCA end + 2 CTP + ATP = a tRNA with a 3' CCACCA end + 3 diphosphate. Functionally, catalyzes the addition and repair of the essential 3'-terminal CCA sequence in tRNAs without using a nucleic acid template. Adds these three nucleotides in the order of C, C, and A to the tRNA nucleotide-73, using CTP and ATP as substrates and producing inorganic pyrophosphate. tRNA 3'-terminal CCA addition is required both for tRNA processing and repair. Also involved in tRNA surveillance by mediating tandem CCA addition to generate a CCACCA at the 3' terminus of unstable tRNAs. While stable tRNAs receive only 3'-terminal CCA, unstable tRNAs are marked with CCACCA and rapidly degraded. The chain is CCA-adding enzyme from Halorubrum lacusprofundi (strain ATCC 49239 / DSM 5036 / JCM 8891 / ACAM 34).